Reading from the N-terminus, the 326-residue chain is Vitamin B12 import system permease protein BtuC (326 aa).

9 helical membrane passes run leucine 19–leucine 39, leucine 61–phenylalanine 81, proline 88–glycine 108, leucine 112–leucine 132, leucine 146–phenylalanine 166, glycine 184–isoleucine 204, glycine 240–isoleucine 260, valine 274–alanine 294, and glutamate 302–leucine 322.

The protein belongs to the binding-protein-dependent transport system permease family. FecCD subfamily. The complex is composed of two ATP-binding proteins (BtuD), two transmembrane proteins (BtuC) and a solute-binding protein (BtuF).

The protein localises to the cell inner membrane. In terms of biological role, part of the ABC transporter complex BtuCDF involved in vitamin B12 import. Involved in the translocation of the substrate across the membrane. This is Vitamin B12 import system permease protein BtuC from Escherichia coli O127:H6 (strain E2348/69 / EPEC).